Consider the following 240-residue polypeptide: Small ribosomal subunit protein uS3 (240 aa).

The KH type-2 domain maps to 39-108; that stretch reads LRKFLKKKLY…ELILNIKEER (70 aa). A compositionally biased stretch (basic and acidic residues) spans 213–224; it reads MNSDDTATPERK. The interval 213-240 is disordered; the sequence is MNSDDTATPERKAPRRRKGRRNVNAKKN. Residues 225–240 are compositionally biased toward basic residues; it reads APRRRKGRRNVNAKKN.

This sequence belongs to the universal ribosomal protein uS3 family. Part of the 30S ribosomal subunit. Forms a tight complex with proteins S10 and S14.

Binds the lower part of the 30S subunit head. Binds mRNA in the 70S ribosome, positioning it for translation. The protein is Small ribosomal subunit protein uS3 of Nautilia profundicola (strain ATCC BAA-1463 / DSM 18972 / AmH).